Reading from the N-terminus, the 278-residue chain is Extracellular metalloprotease GLRG_06511 (278 aa).

The N-terminal stretch at methionine 1–alanine 19 is a signal peptide. Asparagine 51 carries an N-linked (GlcNAc...) asparagine glycan. Residue histidine 190 participates in Zn(2+) binding. Glutamate 191 is a catalytic residue. Histidine 194 provides a ligand contact to Zn(2+). Cysteine 227 and cysteine 254 form a disulfide bridge.

It belongs to the peptidase M43B family.

Its subcellular location is the secreted. Its function is as follows. Secreted metalloproteinase that allows assimilation of proteinaceous substrates. In Colletotrichum graminicola (strain M1.001 / M2 / FGSC 10212) (Maize anthracnose fungus), this protein is Extracellular metalloprotease GLRG_06511.